The following is a 239-amino-acid chain: MGKSLIQQRRGKGTTTFRAPSHRYRGAVKYVPLNIVKEKTLRGVVEEILHDPGRTAPVARVKFEDGTKKLILAPEGVLVGQEIYIGPEAPIAIGNTLPLAKIPEGTYVYNIEGVPGDGGKYVRAGGTYALVVSRERDKVIVQLPSGELKQFKPECRATIGVVAGGGRLEKPIVKAGKAYYIAKARNRFWPKPRGVKMNAVNHPHGGKEHHIGRPSTVSRRAPPGRKVGHIAARRTGRRK.

Residues 200-239 (VNHPHGGKEHHIGRPSTVSRRAPPGRKVGHIAARRTGRRK) are disordered. Over residues 222 to 239 (PPGRKVGHIAARRTGRRK) the composition is skewed to basic residues.

It belongs to the universal ribosomal protein uL2 family. As to quaternary structure, part of the 50S ribosomal subunit. Forms a bridge to the 30S subunit in the 70S ribosome.

In terms of biological role, one of the primary rRNA binding proteins. Required for association of the 30S and 50S subunits to form the 70S ribosome, for tRNA binding and peptide bond formation. It has been suggested to have peptidyltransferase activity; this is somewhat controversial. Makes several contacts with the 16S rRNA in the 70S ribosome. The chain is Large ribosomal subunit protein uL2 from Thermococcus gammatolerans (strain DSM 15229 / JCM 11827 / EJ3).